We begin with the raw amino-acid sequence, 188 residues long: Elongation factor P (188 aa).

Lysine 34 carries the N6-(3,6-diaminohexanoyl)-5-hydroxylysine modification.

Belongs to the elongation factor P family. Post-translationally, may be beta-lysylated on the epsilon-amino group of Lys-34 by the combined action of EpmA and EpmB, and then hydroxylated on the C5 position of the same residue by EpmC (if this protein is present). Lysylation is critical for the stimulatory effect of EF-P on peptide-bond formation. The lysylation moiety may extend toward the peptidyltransferase center and stabilize the terminal 3-CCA end of the tRNA. Hydroxylation of the C5 position on Lys-34 may allow additional potential stabilizing hydrogen-bond interactions with the P-tRNA.

The protein resides in the cytoplasm. It participates in protein biosynthesis; polypeptide chain elongation. Its function is as follows. Involved in peptide bond synthesis. Alleviates ribosome stalling that occurs when 3 or more consecutive Pro residues or the sequence PPG is present in a protein, possibly by augmenting the peptidyl transferase activity of the ribosome. Modification of Lys-34 is required for alleviation. The protein is Elongation factor P of Cronobacter sakazakii (strain ATCC BAA-894) (Enterobacter sakazakii).